The chain runs to 68 residues: Beta-defensin 1 (68 aa).

The first 21 residues, 1–21 (MRTSYLLLFILCLVLCDMDSG), serve as a signal peptide directing secretion. A propeptide spanning residues 22–32 (DTFLTGLGHRS) is cleaved from the precursor. Disulfide bonds link C37/C66, C44/C59, and C49/C67.

Belongs to the beta-defensin family. In terms of assembly, monomer. Homodimer.

It is found in the secreted. The protein resides in the membrane. Its function is as follows. Has bactericidal activity. May act as a ligand for C-C chemokine receptor CCR6. Positively regulates the sperm motility and bactericidal activity in a CCR6-dependent manner. Binds to CCR6 and triggers Ca2+ mobilization in the sperm which is important for its motility. This Saguinus oedipus (Cotton-top tamarin) protein is Beta-defensin 1 (DEFB1).